Here is an 85-residue protein sequence, read N- to C-terminus: RNA-binding protein Hfq (85 aa).

The region spanning 11–71 (DTFLNHVRKS…ISTIMPGHPV (61 aa)) is the Sm domain.

The protein belongs to the Hfq family. As to quaternary structure, homohexamer.

Its function is as follows. RNA chaperone that binds small regulatory RNA (sRNAs) and mRNAs to facilitate mRNA translational regulation in response to envelope stress, environmental stress and changes in metabolite concentrations. Also binds with high specificity to tRNAs. Seems to be involved in the regulation of NifA. This chain is RNA-binding protein Hfq, found in Azorhizobium caulinodans (strain ATCC 43989 / DSM 5975 / JCM 20966 / LMG 6465 / NBRC 14845 / NCIMB 13405 / ORS 571).